A 344-amino-acid polypeptide reads, in one-letter code: Follistatin (344 aa).

The signal sequence occupies residues 1-29 (MARPRHQPGGLCLLLLLLCQFMEDRSAQA). The TB domain occupies 30–103 (GNCWLRQAKN…TCENVDCGPG (74 aa)). Intrachain disulfides connect Cys-32-Cys-55, Cys-42-Cys-88, Cys-56-Cys-91, Cys-95-Cys-106, Cys-100-Cys-116, Cys-118-Cys-150, Cys-122-Cys-143, and Cys-132-Cys-164. The 24-residue stretch at 94 to 117 (TCENVDCGPGKKCRMNKKNKPRCV) folds into the Follistatin-like 1 domain. 3 Kazal-like domains span residues 112 to 166 (NKPR…KCKK), 186 to 241 (NAYC…KCIK), and 261 to 318 (KVGR…SCNS). An N-linked (GlcNAc...) asparagine glycan is attached at Asn-124. In terms of domain architecture, Follistatin-like 2 spans 167–190 (TCRDVFCPGSSTCVVDQTNNAYCV). 3 cysteine pairs are disulfide-bonded: Cys-192–Cys-225, Cys-196–Cys-218, and Cys-207–Cys-239. Residues 244–268 (SCDDIQCTGGKKCLWDFKVGRGRCS) form the Follistatin-like 3 domain. Disulfide bonds link Cys-270/Cys-302, Cys-274/Cys-295, and Cys-284/Cys-316. N-linked (GlcNAc...) asparagine glycosylation is present at Asn-288. Residues 316–344 (CNSISEDTEDEEEDEDQDYSFPISSILEW) form a disordered region. Positions 321-333 (EDTEDEEEDEDQD) are enriched in acidic residues.

Interacts with GDF11. Interacts with activin A/INHBA. Interacts with myostatin/MSTN.

It is found in the secreted. It localises to the nucleus. The protein localises to the nucleolus. In terms of biological role, multifunctional regulatory protein whose primary function is to antagonize members of the transforming growth factor beta (TGF-beta) superfamily including activin, myostatin, GDF11 or bone morphogenetic proteins (BMPs). Mechanistically, binds to these ligands in the extracellular space, blocking their type II receptor-binding site to inhibit downstream signaling. Plays an essential role in muscle fiber formation and growth both by preventing the repressive effects of myostatin and through SMAD3/AKT/mTOR signaling independently of myostatin. Also promotes neural differentiation by antagonizing the action BMP4. Acts as a specific inhibitor of the biosynthesis and secretion of pituitary follicle stimulating hormone (FSH) by sequestering activin A/INHBA. On the other hand, translocates into the nucleus where it down-regulates rRNA synthesis and ribosome biogenesis to maintain cellular energy homeostasis by binding to rDNA. The chain is Follistatin from Bos taurus (Bovine).